A 684-amino-acid polypeptide reads, in one-letter code: Probable Xaa-Pro aminopeptidase P (684 aa).

Positions 481, 492, 590, and 604 each coordinate Mn(2+).

The protein belongs to the peptidase M24B family. Requires Mn(2+) as cofactor.

It carries out the reaction Release of any N-terminal amino acid, including proline, that is linked to proline, even from a dipeptide or tripeptide.. In terms of biological role, catalyzes the removal of a penultimate prolyl residue from the N-termini of peptides. The chain is Probable Xaa-Pro aminopeptidase P (ampp) from Neurospora crassa (strain ATCC 24698 / 74-OR23-1A / CBS 708.71 / DSM 1257 / FGSC 987).